Here is a 571-residue protein sequence, read N- to C-terminus: Streptolysin O (571 aa).

The N-terminal stretch at 1 to 33 (MSNKKTFKKYSRVAGLLTAALIIGNLVTANAES) is a signal peptide. A disordered region spans residues 30-108 (NAESNKQNTA…KKSEEDHTEE (79 aa)). Residues 37 to 48 (NTASTETTTTNE) are compositionally biased toward low complexity. Composition is skewed to basic and acidic residues over residues 50-68 (PKPESSELTTEKAGQKTDD) and 79-108 (APKEMPLESAEKEEKKSEDKKKSEEDHTEE). The next 4 beta stranded transmembrane spans lie at 260–273 (KSQIEAALNVNSKI), 280–289 (IDFKSISKGE), 358–367 (SNDVEAAFSA), and 375–387 (KTNGKYSDILENS). Positions 529-539 (ECTGLAWEWWR) match the Conserved undecapeptide motif. The short motif at 561–562 (TL) is the Cholesterol binding element.

It belongs to the cholesterol-dependent cytolysin family. In terms of assembly, homooligomeric pore complex of 35 to 50 subunits; when inserted in the host membrane.

It localises to the secreted. It is found in the host cell membrane. In terms of biological role, a cholesterol-dependent toxin that causes cytolysis by forming pores in cholesterol containing host membranes. After binding to target membranes, the protein undergoes a major conformation change, leading to its insertion in the host membrane and formation of an oligomeric pore complex. Cholesterol is required for binding to host membranes, membrane insertion and pore formation; cholesterol binding is mediated by a Thr-Leu pair in the C-terminus. Can be reversibly inactivated by oxidation. The sequence is that of Streptolysin O (slo) from Streptococcus pyogenes serotype M18 (strain MGAS8232).